A 630-amino-acid chain; its full sequence is Ribonucleoside-diphosphate reductase large subunit (630 aa).

Residues Ser-67, Ala-82–Cys-83, Gly-111, Asn-317–Glu-321, and Pro-459–Ser-463 contribute to the substrate site. Residues Cys-83 and Cys-334 are joined by a disulfide bond. Asn-317 functions as the Proton acceptor in the catalytic mechanism. The active-site Cysteine radical intermediate is the Cys-319. Glu-321 (proton acceptor) is an active-site residue.

This sequence belongs to the ribonucleoside diphosphate reductase large chain family. In terms of assembly, heterotetramer composed of a homodimer of the large subunit (R1) and a homodimer of the small subunit (R2). Larger multisubunit protein complex are also active, composed of (R1)n(R2)n.

The enzyme catalyses a 2'-deoxyribonucleoside 5'-diphosphate + [thioredoxin]-disulfide + H2O = a ribonucleoside 5'-diphosphate + [thioredoxin]-dithiol. Its activity is regulated as follows. Under complex allosteric control mediated by deoxynucleoside triphosphates and ATP binding. The type of nucleotide bound at the specificity site determines substrate preference. It seems probable that ATP makes the enzyme reduce CDP and UDP, dGTP favors ADP reduction and dTTP favors GDP reduction. In terms of biological role, ribonucleoside-diphosphate reductase holoenzyme provides the precursors necessary for viral DNA synthesis. Allows virus growth in non-dividing cells. Catalyzes the biosynthesis of deoxyribonucleotides from the corresponding ribonucleotides. The protein is Ribonucleoside-diphosphate reductase large subunit of Aedes vexans (Inland floodwater mosquito).